Consider the following 147-residue polypeptide: 3-dehydroquinate dehydratase (147 aa).

Tyr-23 functions as the Proton acceptor in the catalytic mechanism. Substrate is bound by residues Asn-74, His-80, and Asp-87. His-100 acts as the Proton donor in catalysis. Substrate is bound by residues 101–102 (LS) and Arg-111.

This sequence belongs to the type-II 3-dehydroquinase family. In terms of assembly, homododecamer.

It carries out the reaction 3-dehydroquinate = 3-dehydroshikimate + H2O. It functions in the pathway metabolic intermediate biosynthesis; chorismate biosynthesis; chorismate from D-erythrose 4-phosphate and phosphoenolpyruvate: step 3/7. Functionally, catalyzes a trans-dehydration via an enolate intermediate. The chain is 3-dehydroquinate dehydratase from Clostridium botulinum (strain Loch Maree / Type A3).